The sequence spans 155 residues: Ribosomal RNA large subunit methyltransferase H (155 aa).

Residues Leu-72, Gly-103, and Leu-122–Leu-127 each bind S-adenosyl-L-methionine.

Belongs to the RNA methyltransferase RlmH family. As to quaternary structure, homodimer.

It localises to the cytoplasm. It catalyses the reaction pseudouridine(1915) in 23S rRNA + S-adenosyl-L-methionine = N(3)-methylpseudouridine(1915) in 23S rRNA + S-adenosyl-L-homocysteine + H(+). In terms of biological role, specifically methylates the pseudouridine at position 1915 (m3Psi1915) in 23S rRNA. The chain is Ribosomal RNA large subunit methyltransferase H from Acidovorax ebreus (strain TPSY) (Diaphorobacter sp. (strain TPSY)).